The sequence spans 645 residues: Acetyl-coenzyme A synthetase (645 aa).

Residues 190-193 (RGGR), Thr-309, and Asn-333 contribute to the CoA site. ATP is bound by residues 385-387 (GEP), 409-414 (DTWWQT), Asp-498, and Arg-513. Ser-521 contributes to the CoA binding site. Position 524 (Arg-524) interacts with ATP. Residues Val-535, His-537, and Val-540 each contribute to the Mg(2+) site. A CoA-binding site is contributed by Arg-582. Lys-607 carries the post-translational modification N6-acetyllysine.

It belongs to the ATP-dependent AMP-binding enzyme family. Mg(2+) is required as a cofactor. In terms of processing, acetylated. Deacetylation by the SIR2-homolog deacetylase activates the enzyme.

It catalyses the reaction acetate + ATP + CoA = acetyl-CoA + AMP + diphosphate. In terms of biological role, catalyzes the conversion of acetate into acetyl-CoA (AcCoA), an essential intermediate at the junction of anabolic and catabolic pathways. AcsA undergoes a two-step reaction. In the first half reaction, AcsA combines acetate with ATP to form acetyl-adenylate (AcAMP) intermediate. In the second half reaction, it can then transfer the acetyl group from AcAMP to the sulfhydryl group of CoA, forming the product AcCoA. The polypeptide is Acetyl-coenzyme A synthetase (Beijerinckia indica subsp. indica (strain ATCC 9039 / DSM 1715 / NCIMB 8712)).